The chain runs to 341 residues: tRNA dimethylallyltransferase (341 aa).

ATP is bound at residue 15 to 22; it reads GPTAAGKT. A substrate-binding site is contributed by 17–22; the sequence is TAAGKT. 4 interaction with substrate tRNA regions span residues 44 to 47, 168 to 172, 253 to 258, and 302 to 309; these read DSAL, QRIQR, RCVGYR, and KRQITWLR.

It belongs to the IPP transferase family. Monomer. Mg(2+) serves as cofactor.

It carries out the reaction adenosine(37) in tRNA + dimethylallyl diphosphate = N(6)-dimethylallyladenosine(37) in tRNA + diphosphate. Functionally, catalyzes the transfer of a dimethylallyl group onto the adenine at position 37 in tRNAs that read codons beginning with uridine, leading to the formation of N6-(dimethylallyl)adenosine (i(6)A). In Verminephrobacter eiseniae (strain EF01-2), this protein is tRNA dimethylallyltransferase.